A 262-amino-acid chain; its full sequence is 5'-nucleotidase SurE (262 aa).

A divalent metal cation is bound by residues D8, D9, S39, and N95.

Belongs to the SurE nucleotidase family. Requires a divalent metal cation as cofactor.

It is found in the cytoplasm. It carries out the reaction a ribonucleoside 5'-phosphate + H2O = a ribonucleoside + phosphate. Its function is as follows. Nucleotidase that shows phosphatase activity on nucleoside 5'-monophosphates. The protein is 5'-nucleotidase SurE of Methanothermobacter thermautotrophicus (strain ATCC 29096 / DSM 1053 / JCM 10044 / NBRC 100330 / Delta H) (Methanobacterium thermoautotrophicum).